The sequence spans 570 residues: Sulfite reductase [NADPH] hemoprotein beta-component (570 aa).

4 residues coordinate [4Fe-4S] cluster: cysteine 434, cysteine 440, cysteine 479, and cysteine 483. Cysteine 483 contacts siroheme.

It belongs to the nitrite and sulfite reductase 4Fe-4S domain family. In terms of assembly, alpha(8)-beta(8). The alpha component is a flavoprotein, the beta component is a hemoprotein. Siroheme is required as a cofactor. Requires [4Fe-4S] cluster as cofactor.

The enzyme catalyses hydrogen sulfide + 3 NADP(+) + 3 H2O = sulfite + 3 NADPH + 4 H(+). It participates in sulfur metabolism; hydrogen sulfide biosynthesis; hydrogen sulfide from sulfite (NADPH route): step 1/1. Its function is as follows. Component of the sulfite reductase complex that catalyzes the 6-electron reduction of sulfite to sulfide. This is one of several activities required for the biosynthesis of L-cysteine from sulfate. This Salmonella gallinarum (strain 287/91 / NCTC 13346) protein is Sulfite reductase [NADPH] hemoprotein beta-component.